The chain runs to 390 residues: GTPase Obg (390 aa).

The region spanning 1–159 (MKFVDEASVK…RELRLELLLL (159 aa)) is the Obg domain. Residues 160-333 (ADVGMLGLPN…LCFKLGEFME (174 aa)) enclose the OBG-type G domain. GTP contacts are provided by residues 166–173 (GLPNAGKS), 191–195 (FTTLI), 213–216 (DIPG), 283–286 (NKVD), and 314–316 (SAV). The Mg(2+) site is built by Ser-173 and Thr-193.

This sequence belongs to the TRAFAC class OBG-HflX-like GTPase superfamily. OBG GTPase family. As to quaternary structure, monomer. Requires Mg(2+) as cofactor.

It localises to the cytoplasm. Functionally, an essential GTPase which binds GTP, GDP and possibly (p)ppGpp with moderate affinity, with high nucleotide exchange rates and a fairly low GTP hydrolysis rate. Plays a role in control of the cell cycle, stress response, ribosome biogenesis and in those bacteria that undergo differentiation, in morphogenesis control. This Vibrio atlanticus (strain LGP32) (Vibrio splendidus (strain Mel32)) protein is GTPase Obg.